Here is a 522-residue protein sequence, read N- to C-terminus: Glucose-6-phosphate isomerase (522 aa).

Glutamate 351 (proton donor) is an active-site residue. Active-site residues include histidine 382 and lysine 491.

Belongs to the GPI family.

Its subcellular location is the cytoplasm. The enzyme catalyses alpha-D-glucose 6-phosphate = beta-D-fructose 6-phosphate. Its pathway is carbohydrate biosynthesis; gluconeogenesis. It functions in the pathway carbohydrate degradation; glycolysis; D-glyceraldehyde 3-phosphate and glycerone phosphate from D-glucose: step 2/4. Functionally, catalyzes the reversible isomerization of glucose-6-phosphate to fructose-6-phosphate. This chain is Glucose-6-phosphate isomerase, found in Albidiferax ferrireducens (strain ATCC BAA-621 / DSM 15236 / T118) (Rhodoferax ferrireducens).